A 136-amino-acid polypeptide reads, in one-letter code: uncharacterized protein (136 aa).

The protein localises to the mitochondrion. This is an uncharacterized protein from Arabidopsis thaliana (Mouse-ear cress).